A 291-amino-acid polypeptide reads, in one-letter code: Protease HtpX (291 aa).

The next 2 helical transmembrane spans lie at 4-24 (IVIFLLTNLAVMVVFGILLTC) and 37-57 (IISGLFGFCGAFISLLMSKFI). Residue histidine 139 participates in Zn(2+) binding. Glutamate 140 is an active-site residue. Residue histidine 143 coordinates Zn(2+). The next 2 helical transmembrane spans lie at 147-167 (GDMVTITLISGIVNTFVIFIS) and 195-215 (IVSTILELAFGILASIIVLWF). Residue glutamate 220 coordinates Zn(2+).

The protein belongs to the peptidase M48B family. Requires Zn(2+) as cofactor.

It is found in the cell membrane. This Baumannia cicadellinicola subsp. Homalodisca coagulata protein is Protease HtpX.